A 374-amino-acid polypeptide reads, in one-letter code: Phosphatidyl-myo-inositol mannosyltransferase (374 aa).

Residues Y9 and G16 each contribute to the GDP-alpha-D-mannose site. A 1,2-diacyl-sn-glycero-3-phospho-(1D-myo-inositol)-binding positions include Q18, Y62–N63, and R68. GDP-alpha-D-mannose contacts are provided by residues R196, R201–K202, V251–D253, K256, E274–I278, and E282.

Belongs to the glycosyltransferase group 1 family. Glycosyltransferase 4 subfamily. As to quaternary structure, monomer. Requires Mg(2+) as cofactor.

Its subcellular location is the cell membrane. The catalysed reaction is a 1,2-diacyl-sn-glycero-3-phospho-(1D-myo-inositol) + GDP-alpha-D-mannose = a 1,2-diacyl-sn-glycero-3-phospho-[alpha-D-mannopyranosyl-(1&lt;-&gt;6)-D-myo-inositol] + GDP + H(+). It functions in the pathway phospholipid metabolism; phosphatidylinositol metabolism. Functionally, involved in the biosynthesis of phosphatidyl-myo-inositol mannosides (PIM) which are early precursors in the biosynthesis of lipomannans (LM) and lipoarabinomannans (LAM). Catalyzes the addition of a mannosyl residue from GDP-D-mannose (GDP-Man) to the position 2 of the carrier lipid phosphatidyl-myo-inositol (PI) to generate a phosphatidyl-myo-inositol bearing an alpha-1,2-linked mannose residue (PIM1). The chain is Phosphatidyl-myo-inositol mannosyltransferase from Mycobacterium leprae (strain TN).